Consider the following 206-residue polypeptide: AT-hook motif nuclear-localized protein 28 (206 aa).

2 disordered regions span residues methionine 1 to proline 21 and threonine 160 to tyrosine 206. Positions glycine 5–lysine 17 form a DNA-binding region, a.T hook. Over residues proline 7–proline 18 the composition is skewed to basic residues. In terms of domain architecture, PPC spans aspartate 27–glutamate 173.

The protein resides in the nucleus. Transcription factor that specifically binds AT-rich DNA sequences related to the nuclear matrix attachment regions (MARs). The chain is AT-hook motif nuclear-localized protein 28 from Arabidopsis thaliana (Mouse-ear cress).